Reading from the N-terminus, the 423-residue chain is MDKIIIEGGQTRLEGEVVIEGAKNAVLPLLAASILPSKGKTILRNVPILSDVFTMNNVVRGLDIRVDFNEAANEITVDASGHILDEAPYEYVSQMRASIVVLGPILARNGHAKVSMPGGCTIGSRPINLHLKGLEAMGATITQKGGDITAQADRLQGAMIYMDFPSVGATQNLMMAATLADGVTTIENAAREPEIVDLAQFLNKMGARIRGAGTETLTITGVTSLHGVEHDVVQDRIEAGTFMVAAAMTSGNVLIRDAVWEHNRPLISKLMEMGVSVTEEEYGIRVQANTPKLKPVTVKTLPHPGFPTDMQAQFTALMAVVNGESTMVETVFENRFQHLEEMRRMGLQSEILRETAMIHGGRQLQGAPVMSTDLRASAALILTGIVAQGVTIVNNLVHLDRGYYQFHEKLAKLGATISRSSEV.

23–24 (KN) contributes to the phosphoenolpyruvate binding site. R96 is a UDP-N-acetyl-alpha-D-glucosamine binding site. Residue C120 is the Proton donor of the active site. C120 carries the post-translational modification 2-(S-cysteinyl)pyruvic acid O-phosphothioketal. The UDP-N-acetyl-alpha-D-glucosamine site is built by D309 and V331.

The protein belongs to the EPSP synthase family. MurA subfamily.

It localises to the cytoplasm. The enzyme catalyses phosphoenolpyruvate + UDP-N-acetyl-alpha-D-glucosamine = UDP-N-acetyl-3-O-(1-carboxyvinyl)-alpha-D-glucosamine + phosphate. It participates in cell wall biogenesis; peptidoglycan biosynthesis. Its function is as follows. Cell wall formation. Adds enolpyruvyl to UDP-N-acetylglucosamine. The sequence is that of UDP-N-acetylglucosamine 1-carboxyvinyltransferase 1 from Streptococcus pyogenes serotype M3 (strain ATCC BAA-595 / MGAS315).